A 292-amino-acid polypeptide reads, in one-letter code: Light-independent protochlorophyllide reductase iron-sulfur ATP-binding protein (292 aa).

ATP contacts are provided by residues 10 to 15 and lysine 39; that span reads GIGKST. A Mg(2+)-binding site is contributed by serine 14. Cysteine 95 contacts [4Fe-4S] cluster. 182 to 183 serves as a coordination point for ATP; sequence NR.

The protein belongs to the NifH/BchL/ChlL family. As to quaternary structure, homodimer. Protochlorophyllide reductase is composed of three subunits; ChlL, ChlN and ChlB. [4Fe-4S] cluster serves as cofactor.

The protein resides in the plastid. The protein localises to the chloroplast. The catalysed reaction is chlorophyllide a + oxidized 2[4Fe-4S]-[ferredoxin] + 2 ADP + 2 phosphate = protochlorophyllide a + reduced 2[4Fe-4S]-[ferredoxin] + 2 ATP + 2 H2O. The protein operates within porphyrin-containing compound metabolism; chlorophyll biosynthesis (light-independent). Component of the dark-operative protochlorophyllide reductase (DPOR) that uses Mg-ATP and reduced ferredoxin to reduce ring D of protochlorophyllide (Pchlide) to form chlorophyllide a (Chlide). This reaction is light-independent. The L component serves as a unique electron donor to the NB-component of the complex, and binds Mg-ATP. The sequence is that of Light-independent protochlorophyllide reductase iron-sulfur ATP-binding protein from Huperzia lucidula (Shining clubmoss).